We begin with the raw amino-acid sequence, 404 residues long: MSPSDVPINWKRNLTVTWLGCFLTGAAFSLVMPFLPLYVEQLGVTGHSALNMWSGLVFSITFLFSAIASPFWGGLADRKGRKIMLLRSALGMAIVMLLMGMAQNIWQFLILRALLGLLGGFIPNANALIATQVPRHKSGWALGTLSTGGVSGALLGPLAGGLLADHYGLRPVFFITASVLFICFLLTFFFIRENFLPVSKKEMLHVREVVASLKNPRLVLSLFVTTLIIQVATGSIAPILTLYVRELAGNVSNIAFISGMIASVPGVAALLSAPRLGKLGDRIGPEKILIVALIISVLLLIPMSFVQTPWQLALLRFLLGAADGALLPAVQTLLVYNSTNQIAGRIFSYNQSFRDIGNVTGPLMGAAISASYDFRAVFCVTAGVVLFNAIYSWNSLRRRRLAIE.

Transmembrane regions (helical) follow at residues 19 to 39 (LGCF…PLYV), 56 to 76 (LVFS…GGLA), 90 to 110 (LGMA…QFLI), 113 to 133 (ALLG…ATQV), 144 to 164 (TLST…GLLA), 171 to 191 (PVFF…FFFI), 222 to 242 (LFVT…ILTL), 254 to 274 (IAFI…LSAP), 288 to 308 (ILIV…FVQT), 317 to 337 (FLLG…LVYN), and 376 to 396 (AVFC…WNSL).

It belongs to the major facilitator superfamily. DHA1 family. MdtG (TC 2.A.1.2.20) subfamily.

It localises to the cell inner membrane. The chain is Multidrug resistance protein MdtG from Salmonella heidelberg (strain SL476).